The chain runs to 539 residues: Chaperonin GroEL 1 (539 aa).

Residues 30-33, Lys51, 87-91, Gly415, 480-482, and Asp496 contribute to the ATP site; these read TLGP, DGTTT, and NAA.

Belongs to the chaperonin (HSP60) family. As to quaternary structure, forms a cylinder of 14 subunits composed of two heptameric rings stacked back-to-back. Interacts with the co-chaperonin GroES.

The protein localises to the cytoplasm. It catalyses the reaction ATP + H2O + a folded polypeptide = ADP + phosphate + an unfolded polypeptide.. Together with its co-chaperonin GroES, plays an essential role in assisting protein folding. The GroEL-GroES system forms a nano-cage that allows encapsulation of the non-native substrate proteins and provides a physical environment optimized to promote and accelerate protein folding. This chain is Chaperonin GroEL 1, found in Erythrobacter litoralis (strain HTCC2594).